A 438-amino-acid polypeptide reads, in one-letter code: Tyrosine--tRNA ligase (438 aa).

L-tyrosine is bound at residue Tyr47. The 'HIGH' region signature appears at 52–61; that stretch reads PTATSLHVGG. L-tyrosine contacts are provided by Tyr183 and Gln187. The short motif at 243 to 247 is the 'KMSKS' region element; it reads KMGKT. Lys246 lines the ATP pocket. Residues 370–436 form the S4 RNA-binding domain; that stretch reads LWIVEALQTA…GKRKYALLKI (67 aa).

The protein belongs to the class-I aminoacyl-tRNA synthetase family. TyrS type 1 subfamily. As to quaternary structure, homodimer.

It is found in the cytoplasm. It carries out the reaction tRNA(Tyr) + L-tyrosine + ATP = L-tyrosyl-tRNA(Tyr) + AMP + diphosphate + H(+). Its function is as follows. Catalyzes the attachment of tyrosine to tRNA(Tyr) in a two-step reaction: tyrosine is first activated by ATP to form Tyr-AMP and then transferred to the acceptor end of tRNA(Tyr). The protein is Tyrosine--tRNA ligase of Rhodopirellula baltica (strain DSM 10527 / NCIMB 13988 / SH1).